Consider the following 153-residue polypeptide: Histone H2B.6 (153 aa).

Composition is skewed to basic and acidic residues over residues 1–28 (MAPKAEKKPAAKKPAEEEPAAEKAEKAP) and 36–53 (EKRLPAGKGEKGSGEGKK). Residues 1–60 (MAPKAEKKPAAKKPAEEEPAAEKAEKAPAGKKPKAEKRLPAGKGEKGSGEGKKAGRKKGK) are disordered. Residues Lys7 and Lys37 each carry the N6-acetyllysine modification. Lys149 participates in a covalent cross-link: Glycyl lysine isopeptide (Lys-Gly) (interchain with G-Cter in ubiquitin).

It belongs to the histone H2B family. In terms of assembly, the nucleosome is a histone octamer containing two molecules each of H2A, H2B, H3 and H4 assembled in one H3-H4 heterotetramer and two H2A-H2B heterodimers. The octamer wraps approximately 147 bp of DNA. Can be acetylated to form H2BK6ac and H2BK33ac. In terms of processing, monoubiquitinated by BRE1 to form H2BK143ub1 and deubiquitinated by UBP26. Required for heterochromatic histone H3 di- and trimethylation at H3K4me. May give a specific tag for epigenetic transcriptional activation.

It localises to the nucleus. Its subcellular location is the chromosome. Core component of nucleosome. Nucleosomes wrap and compact DNA into chromatin, limiting DNA accessibility to the cellular machineries which require DNA as a template. Histones thereby play a central role in transcription regulation, DNA repair, DNA replication and chromosomal stability. DNA accessibility is regulated via a complex set of post-translational modifications of histones, also called histone code, and nucleosome remodeling. The sequence is that of Histone H2B.6 (H2B.6) from Oryza sativa subsp. japonica (Rice).